The primary structure comprises 548 residues: MKNINPSQTAAWKALQQHFEQMKDVTISSLFAKDDQRFNQFSATFDDQMLVDFSKNRITRETMEKLQALAKETDLAGAIKAMFSGEKINRTEDRAVLHIALRNRSNTPIVVDGKDVMPEVNAVLAKMKQFCDRVIGGEWKGYTGKAITDVVNIGIGGSDLGPYMVTEALRPYKNHLNMHFVSNVDGTHIAETLKPLNPETTLFLVASKTFTTQETMTNAHSARDWFLSTASDEKHVAKHFAALSTNAKAVGEFGIDTNNMFEFWDWVGGRYSLWSAIGLSIALSVGFENFEQLLSGAHAMDKHFAETPAEKNLPILLALIGIWYNNFFGAETEAILPYDQYMHRFPAYFQQGNMESNGKYVGRDGKPVDYQTGPIIWGEPGTNGQHAFYQLIHQGTKLVPCDFIAPAISHNPLSDHHAKLLSNFFAQTEALAFGKSLAEVEAEFAATGKTPEQVAHVAPFKVFEGNRPTNSILLREITPFSLGALIALYEHKIFTQGVILNIYSFDQWGVELGKQLANRILPELAGDEKVTSHDSSTNALINRFKSWR.

E355 (proton donor) is an active-site residue. Catalysis depends on residues H386 and K514.

Belongs to the GPI family.

Its subcellular location is the cytoplasm. It carries out the reaction alpha-D-glucose 6-phosphate = beta-D-fructose 6-phosphate. The protein operates within carbohydrate biosynthesis; gluconeogenesis. Its pathway is carbohydrate degradation; glycolysis; D-glyceraldehyde 3-phosphate and glycerone phosphate from D-glucose: step 2/4. Its function is as follows. Catalyzes the reversible isomerization of glucose-6-phosphate to fructose-6-phosphate. The protein is Glucose-6-phosphate isomerase of Yersinia enterocolitica serotype O:8 / biotype 1B (strain NCTC 13174 / 8081).